Reading from the N-terminus, the 206-residue chain is Protein Nef (206 aa).

Residue G2 is the site of N-myristoyl glycine; by host attachment. A Phosphoserine; by host modification is found at S6. Positions 62-65 are acidic; interacts with host PACS1 and PACS2; stabilizes the interaction of NEF/MHC-I with host AP1M1; necessary for MHC-I internalization; sequence EEEE. The interval 69–78 is SH3-binding; interaction with Src family tyrosine kinases; the sequence is PVTPQVPLRP. Residues 72–75 carry the PxxP; stabilizes the interaction of NEF/MHC-I with host AP1M1; necessary for MHC-I internalization motif; that stretch reads PQVP. Residues 108 to 124 are mediates dimerization, Nef-PTE1 interaction; sequence DILDLWIYHTQGYFPDW. A binding to ATP6V1H region spans residues 148 to 180; it reads VEPEKLEEANKGENTSLLHPVSLHGMDDPEREV. Positions 164-165 match the Dileucine internalization motif; necessary for CD4 internalization motif; that stretch reads LL. Positions 174 to 175 match the Diacidic; necessary for CD4 internalization motif; it reads DD.

Belongs to the lentivirus primate group Nef protein family. In terms of assembly, monomer; cytosolic form. Homodimer; membrane bound form. Interacts with Nef associated p21-activated kinase (PAK2); this interaction activates PAK2. Associates with the Nef-MHC-I-AP1 complex; this complex is required for MHC-I internalization. Interacts (via C-terminus) with host PI3-kinase. Interacts with host PACS1; this interaction seems to be weak. Interacts with host PACS2. Interacts with host LCK and MAPK3; these interactions inhibit the kinase activity of the latter. Interacts with host ATP6V1H; this interaction may play a role in CD4 endocytosis. Associates with the CD4-Nef-AP2 complex; this complex is required for CD4 internalization. Interacts with host AP2 subunit alpha and AP2 subunit sigma2. Interacts with TCR-zeta chain; this interaction up-regulates the Fas ligand (FasL) surface expression. Interacts with host HCK, LYN, and SRC; these interactions activate the Src family kinases. Interacts with MAP3K5; this interaction inhibits the Fas and TNFR-mediated death signals. Interacts with beta-COP and PTE1. Interacts with human RACK1; this increases Nef phosphorylation by PKC. Interacts with TP53; this interaction decreases the half-life of TP53, protecting the infected cell against p53-mediated apoptosis. The virion-associated Nef proteins are cleaved by the viral protease to release the soluble C-terminal core protein. Nef is probably cleaved concomitantly with viral structural proteins on maturation of virus particles. In terms of processing, myristoylated. Post-translationally, phosphorylated on serine residues, probably by host PKCdelta and theta.

It is found in the host cell membrane. Its subcellular location is the virion. The protein resides in the secreted. The protein localises to the host Golgi apparatus membrane. Factor of infectivity and pathogenicity, required for optimal virus replication. Alters numerous pathways of T-lymphocyte function and down-regulates immunity surface molecules in order to evade host defense and increase viral infectivity. Alters the functionality of other immunity cells, like dendritic cells, monocytes/macrophages and NK cells. Its function is as follows. In infected CD4(+) T-lymphocytes, down-regulates the surface MHC-I, mature MHC-II, CD4, CD28, CCR5 and CXCR4 molecules. Mediates internalization and degradation of host CD4 through the interaction of with the cytoplasmic tail of CD4, the recruitment of AP-2 (clathrin adapter protein complex 2), internalization through clathrin coated pits, and subsequent transport to endosomes and lysosomes for degradation. Diverts host MHC-I molecules to the trans-Golgi network-associated endosomal compartments by an endocytic pathway to finally target them for degradation. MHC-I down-regulation may involve AP-1 (clathrin adapter protein complex 1) or possibly Src family kinase-ZAP70/Syk-PI3K cascade recruited by PACS2. In consequence infected cells are masked for immune recognition by cytotoxic T-lymphocytes. Decreasing the number of immune receptors also prevents reinfection by more HIV particles (superinfection). Down-regulates host SERINC3 and SERINC5 thereby excluding these proteins from the viral particles. Virion infectivity is drastically higher when SERINC3 or SERINC5 are excluded from the viral envelope, because these host antiviral proteins impair the membrane fusion event necessary for subsequent virion penetration. Functionally, bypasses host T-cell signaling by inducing a transcriptional program nearly identical to that of anti-CD3 cell activation. Interaction with TCR-zeta chain up-regulates the Fas ligand (FasL). Increasing surface FasL molecules and decreasing surface MHC-I molecules on infected CD4(+) cells send attacking cytotoxic CD8+ T-lymphocytes into apoptosis. In terms of biological role, plays a role in optimizing the host cell environment for viral replication without causing cell death by apoptosis. Protects the infected cells from apoptosis in order to keep them alive until the next virus generation is ready to strike. Inhibits the Fas and TNFR-mediated death signals by blocking MAP3K5/ASK1. Decreases the half-life of TP53, protecting the infected cell against p53-mediated apoptosis. Inhibits the apoptotic signals regulated by the Bcl-2 family proteins through the formation of a Nef/PI3-kinase/PAK2 complex that leads to activation of PAK2 and induces phosphorylation of host BAD. Extracellular Nef protein targets CD4(+) T-lymphocytes for apoptosis by interacting with CXCR4 surface receptors. The chain is Protein Nef from Human immunodeficiency virus type 1 group M subtype B (isolate LW123) (HIV-1).